The chain runs to 456 residues: Adenylosuccinate lyase (456 aa).

N(6)-(1,2-dicarboxyethyl)-AMP-binding positions include 15-16 (RY), 90-92 (NHD), and 122-123 (TS). The active-site Proton donor/acceptor is the histidine 171. A N(6)-(1,2-dicarboxyethyl)-AMP-binding site is contributed by glutamine 247. Residue serine 295 is the Proton donor/acceptor of the active site. Residues serine 296, 301–303 (KVN), asparagine 309, arginine 335, and 340–344 (STVLR) each bind N(6)-(1,2-dicarboxyethyl)-AMP.

Belongs to the lyase 1 family. Adenylosuccinate lyase subfamily. In terms of assembly, homotetramer. Residues from neighboring subunits contribute catalytic and substrate-binding residues to each active site.

The enzyme catalyses N(6)-(1,2-dicarboxyethyl)-AMP = fumarate + AMP. It catalyses the reaction (2S)-2-[5-amino-1-(5-phospho-beta-D-ribosyl)imidazole-4-carboxamido]succinate = 5-amino-1-(5-phospho-beta-D-ribosyl)imidazole-4-carboxamide + fumarate. It participates in purine metabolism; AMP biosynthesis via de novo pathway; AMP from IMP: step 2/2. It functions in the pathway purine metabolism; IMP biosynthesis via de novo pathway; 5-amino-1-(5-phospho-D-ribosyl)imidazole-4-carboxamide from 5-amino-1-(5-phospho-D-ribosyl)imidazole-4-carboxylate: step 2/2. Its function is as follows. Catalyzes two reactions in de novo purine nucleotide biosynthesis. Catalyzes the breakdown of 5-aminoimidazole- (N-succinylocarboxamide) ribotide (SAICAR or 2-[5-amino-1-(5-phospho-beta-D-ribosyl)imidazole-4-carboxamido]succinate) to 5-aminoimidazole-4-carboxamide ribotide (AICAR or 5-amino-1-(5-phospho-beta-D-ribosyl)imidazole-4-carboxamide) and fumarate, and of adenylosuccinate (ADS or N(6)-(1,2-dicarboxyethyl)-AMP) to adenosine monophosphate (AMP) and fumarate. This Haemophilus influenzae (strain ATCC 51907 / DSM 11121 / KW20 / Rd) protein is Adenylosuccinate lyase (purB).